We begin with the raw amino-acid sequence, 500 residues long: Maturase K (500 aa).

Belongs to the intron maturase 2 family. MatK subfamily.

The protein resides in the plastid. The protein localises to the chloroplast. Usually encoded in the trnK tRNA gene intron. Probably assists in splicing its own and other chloroplast group II introns. This Argentina anserina (Silverweed cinquefoil) protein is Maturase K.